The primary structure comprises 252 residues: MKNEIAAVVFFFTRLVRKHDKLKKEAVERFAEKLTQILQEKYKNHWYPEKPSKGQAYRCIRVNKFQRVDPDVLKACEDSCILYSDLGLPKELTLWVDPCEVCCRYGKKNNAFIVASFENEDENKDEISKKVSRALDKVTSDYHSGSSSSDEDTSKEVEVKPSAVATTPSPVYQISELIFPPLPMWHPLPRKKPGMYRGGGHQSHYPPPVPFAYPSPGRKNKAFRPIPVTWVPPPGMHCDRNHWINPHMLAPH.

Residues 138-162 (VTSDYHSGSSSSDEDTSKEVEVKPS) form a disordered region.

Belongs to the BTG family. As to expression, highly expressed in the brain.

Its function is as follows. Overexpression impairs serum-induced cell cycle progression from the G0/G1 to S phase. In Rattus norvegicus (Rat), this protein is Protein BTG3.